The sequence spans 128 residues: Prokineticin-2 (128 aa).

Positions 1 to 26 are cleaved as a signal peptide; it reads MGDPRCAPLLLLLLLPLLFTPPAGDA. 5 disulfide bridges follow: Cys-33/Cys-45, Cys-39/Cys-57, Cys-44/Cys-106, Cys-67/Cys-114, and Cys-108/Cys-124.

Belongs to the AVIT (prokineticin) family. As to expression, expressed in the SCN and among a few other discrete brain areas, including the islands of Calleja, media l preoptic area of the hypothalamus and the shell of the nucleus accumbens. Highly expressed in testis. In the SCN, expression subjected to high amplitude of circadian oscillation.

It localises to the secreted. Its function is as follows. May function as an output molecule from the suprachiasmatic nucleus (SCN) that transmits behavioral circadian rhythm. May also function locally within the SCN to synchronize output. Potently contracts gastrointestinal (GI) smooth muscle. In Mus musculus (Mouse), this protein is Prokineticin-2 (Prok2).